A 206-amino-acid chain; its full sequence is Triosephosphate isomerase (206 aa).

The active-site Electrophile is H76. E146 acts as the Proton acceptor in catalysis.

The protein belongs to the triosephosphate isomerase family. In terms of assembly, homodimer.

It carries out the reaction D-glyceraldehyde 3-phosphate = dihydroxyacetone phosphate. It participates in carbohydrate biosynthesis; gluconeogenesis. It functions in the pathway carbohydrate degradation; glycolysis; D-glyceraldehyde 3-phosphate from glycerone phosphate: step 1/1. In Anopheles merus (Mosquito), this protein is Triosephosphate isomerase (Tpi).